A 184-amino-acid polypeptide reads, in one-letter code: Regulatory protein RecX (184 aa).

A disordered region spans residues 1-21; it reads MTLFPLPSTSDPAEADESTKR.

The protein belongs to the RecX family.

It is found in the cytoplasm. Functionally, modulates RecA activity. The sequence is that of Regulatory protein RecX from Mycolicibacterium vanbaalenii (strain DSM 7251 / JCM 13017 / BCRC 16820 / KCTC 9966 / NRRL B-24157 / PYR-1) (Mycobacterium vanbaalenii).